The sequence spans 783 residues: LPS-assembly protein LptD (783 aa).

An N-terminal signal peptide occupies residues 1–24; sequence MSCFSRTFLAASISAALFAPQIQA.

It belongs to the LptD family. Component of the lipopolysaccharide transport and assembly complex. Interacts with LptE and LptA.

The protein resides in the cell outer membrane. Its function is as follows. Together with LptE, is involved in the assembly of lipopolysaccharide (LPS) at the surface of the outer membrane. This chain is LPS-assembly protein LptD, found in Vibrio cholerae serotype O1 (strain ATCC 39315 / El Tor Inaba N16961).